We begin with the raw amino-acid sequence, 202 residues long: Glycerol-3-phosphate acyltransferase (202 aa).

The next 6 helical transmembrane spans lie at 3–23 (NLIIYAFIYLLGSIPFGLILA), 61–81 (IATIILDFAKAAIPLLILKFL), 87–107 (LLWSVAVLAIFGHCFSIYLLF), 118–138 (GAMIVLLPLEVLTAFIVWVVI), 144–164 (ISSLASLAALLAFVISSFIFN), and 167–187 (LEIHTHAPVFIIAFIIIYKHL).

It belongs to the PlsY family. In terms of assembly, probably interacts with PlsX.

It is found in the cell inner membrane. It carries out the reaction an acyl phosphate + sn-glycerol 3-phosphate = a 1-acyl-sn-glycero-3-phosphate + phosphate. It functions in the pathway lipid metabolism; phospholipid metabolism. In terms of biological role, catalyzes the transfer of an acyl group from acyl-phosphate (acyl-PO(4)) to glycerol-3-phosphate (G3P) to form lysophosphatidic acid (LPA). This enzyme utilizes acyl-phosphate as fatty acyl donor, but not acyl-CoA or acyl-ACP. In Campylobacter jejuni subsp. jejuni serotype O:23/36 (strain 81-176), this protein is Glycerol-3-phosphate acyltransferase.